The following is a 310-amino-acid chain: Membrane protein insertase YidC 2 (310 aa).

The N-terminal stretch at 1–23 is a signal peptide; that stretch reads MKKTLKRILFSSLSLSMLLLLTG. Cysteine 24 carries N-palmitoyl cysteine lipidation. Cysteine 24 carries S-diacylglycerol cysteine lipidation. Helical transmembrane passes span 33 to 53, 58 to 78, 135 to 155, 180 to 200, and 219 to 239; these read PYGV…TYFA, LGFG…ILPL, FGGI…AIFF, LTVI…QGVP, and VFMS…GGIF. The segment at 266–310 is disordered; the sequence is NPPKAYKANNARKDVTNSTKATESNQAIITSKKTNRNAGKQKRRG. A compositionally biased stretch (polar residues) spans 281-297; that stretch reads TNSTKATESNQAIITSK. The segment covering 298-310 has biased composition (basic residues); that stretch reads KTNRNAGKQKRRG.

Belongs to the OXA1/ALB3/YidC family. Type 2 subfamily.

Its subcellular location is the cell membrane. In terms of biological role, required for the insertion and/or proper folding and/or complex formation of integral membrane proteins into the membrane. Involved in integration of membrane proteins that insert both dependently and independently of the Sec translocase complex, as well as at least some lipoproteins. The chain is Membrane protein insertase YidC 2 from Streptococcus agalactiae serotype V (strain ATCC BAA-611 / 2603 V/R).